A 388-amino-acid polypeptide reads, in one-letter code: S-adenosylmethionine synthase (388 aa).

ATP is bound at residue His-14. Asp-16 contacts Mg(2+). Residue Glu-42 participates in K(+) binding. L-methionine-binding residues include Glu-55 and Gln-98. A flexible loop region spans residues 98–108 (QSAEISSAVDQ). Residues 166-168 (DGK), Asp-242, 248-249 (RK), Ala-265, and Lys-269 contribute to the ATP site. Position 242 (Asp-242) interacts with L-methionine. Lys-273 is a binding site for L-methionine.

Belongs to the AdoMet synthase family. Homotetramer; dimer of dimers. Mg(2+) serves as cofactor. Requires K(+) as cofactor.

It is found in the cytoplasm. The enzyme catalyses L-methionine + ATP + H2O = S-adenosyl-L-methionine + phosphate + diphosphate. It participates in amino-acid biosynthesis; S-adenosyl-L-methionine biosynthesis; S-adenosyl-L-methionine from L-methionine: step 1/1. In terms of biological role, catalyzes the formation of S-adenosylmethionine (AdoMet) from methionine and ATP. The overall synthetic reaction is composed of two sequential steps, AdoMet formation and the subsequent tripolyphosphate hydrolysis which occurs prior to release of AdoMet from the enzyme. This is S-adenosylmethionine synthase from Oenococcus oeni (strain ATCC BAA-331 / PSU-1).